A 346-amino-acid chain; its full sequence is tRNA(Ile)-lysidine synthase (346 aa).

32-37 (SGGPDS) serves as a coordination point for ATP.

The protein belongs to the tRNA(Ile)-lysidine synthase family.

Its subcellular location is the cytoplasm. The enzyme catalyses cytidine(34) in tRNA(Ile2) + L-lysine + ATP = lysidine(34) in tRNA(Ile2) + AMP + diphosphate + H(+). In terms of biological role, ligates lysine onto the cytidine present at position 34 of the AUA codon-specific tRNA(Ile) that contains the anticodon CAU, in an ATP-dependent manner. Cytidine is converted to lysidine, thus changing the amino acid specificity of the tRNA from methionine to isoleucine. This chain is tRNA(Ile)-lysidine synthase, found in Rhodopseudomonas palustris (strain ATCC BAA-98 / CGA009).